A 130-amino-acid polypeptide reads, in one-letter code: Small ribosomal subunit protein uS8 (130 aa).

The protein belongs to the universal ribosomal protein uS8 family. Part of the 30S ribosomal subunit.

One of the primary rRNA binding proteins, it binds directly to 16S rRNA central domain where it helps coordinate assembly of the platform of the 30S subunit. This Methanosphaera stadtmanae (strain ATCC 43021 / DSM 3091 / JCM 11832 / MCB-3) protein is Small ribosomal subunit protein uS8.